A 103-amino-acid chain; its full sequence is N(4)-acetylcytidine amidohydrolase (103 aa).

An ASCH domain is found at 6–101 (ITFFQRFQDD…QTQFYVIEFK (96 aa)). Lys-21 functions as the Proton acceptor in the catalytic mechanism. Thr-24 acts as the Nucleophile in catalysis. The active-site Proton donor is the Glu-74.

It belongs to the N(4)-acetylcytidine amidohydrolase family.

The enzyme catalyses N(4)-acetylcytidine + H2O = cytidine + acetate + H(+). The catalysed reaction is N(4)-acetyl-2'-deoxycytidine + H2O = 2'-deoxycytidine + acetate + H(+). It catalyses the reaction N(4)-acetylcytosine + H2O = cytosine + acetate + H(+). Its function is as follows. Catalyzes the hydrolysis of N(4)-acetylcytidine (ac4C). The protein is N(4)-acetylcytidine amidohydrolase (yqfB) of Escherichia coli O8 (strain IAI1).